The sequence spans 344 residues: GTPase Obg (344 aa).

The Obg domain maps to 1–159 (MKFLDEAKVY…MWLILRLKLI (159 aa)). The OBG-type G domain maps to 160-327 (ADAGLVGLPN…ALRAIQAQLD (168 aa)). Residues 166-173 (GLPNAGKS), 191-195 (FTTLH), 212-215 (DIPG), 279-282 (SKAD), and 308-310 (SAA) each bind GTP. Mg(2+)-binding residues include Ser173 and Thr193.

The protein belongs to the TRAFAC class OBG-HflX-like GTPase superfamily. OBG GTPase family. In terms of assembly, monomer. Requires Mg(2+) as cofactor.

It localises to the cytoplasm. Its function is as follows. An essential GTPase which binds GTP, GDP and possibly (p)ppGpp with moderate affinity, with high nucleotide exchange rates and a fairly low GTP hydrolysis rate. Plays a role in control of the cell cycle, stress response, ribosome biogenesis and in those bacteria that undergo differentiation, in morphogenesis control. The sequence is that of GTPase Obg from Methylorubrum extorquens (strain CM4 / NCIMB 13688) (Methylobacterium extorquens).